Here is a 1710-residue protein sequence, read N- to C-terminus: MSLDFGSVALPVQNEDEEYDEEDYEREKELQQLLTDLPHDMLDDDLSSPELQYSDCSEDGTDGQPHHPEQLEMSWNEQMLPKSQSVNGYNEIQSLYAGEKCGNVWEENRSKTEDRHPVYHPEEGGDEGGSGYSPPSKCEQTDLYHLPENFRPYTNGQKQEFNNQATNVIKFSDPQWNHFQGPSCQGLEPYNKVTYKPYQSSAQNNGSPAQEITGSDTFEGLQQQFLGANENSAENMQIIQLQVLNKAKERQLENLIEKLNESERQIRYLNHQLVIIKDEKDGLTLSLRESQKLFQNGKEREIQLEAQIKALETQIQALKVNEEQMIKKSRTTEMALESLKQQLVDLHHSESLQRAREQHESIVMGLTKKYEEQVLSLQKNLDATVTALKEQEDICSRLKDHVKQLERNQEAIKLEKTEIINKLTRSLEESQKQCAHLLQSGSVQEVAQLQFQLQQAQKAHAMSANMNKALQEELTELKDEISLYESAAKLGIHPSDSEGELNIELTESYVDLGIKKVNWKKSKVTSIVQEEDPNEELSKDEFILKLKAEVQRLLGSNSMKRHLVSQLQNDLKDCHKKIEDLHQVKKDEKSIEVETKTDTSEKPKNQLWPESSTSDVVRDDILLLKNEIQVLQQQNQELKETEGKLRNTNQDLCNQMRQMVQDFDHDKQEAVDRCERTYQQHHEAMKTQIRESLLAKHALEKQQLFEAYERTHLQLRSELDKLNKEVTAVQECYLEVCREKDNLELTLRKTTEKEQQTQEKIKEKLIQQLEKEWQSKLDQTIKAMKKKTLDCGSQTDQVTTSDVISKKEMAIMIEEQKCTIQQNLEQEKDIAIKGAMKKLEIELELKHCENITKQVEIAVQNAHQRWLGELPELAEYQALVKAEQKKWEEQHEVSVNKRISFAVSEAKEKWKSELENMRKNILPGKELEEKIHSLQKELELKNEEVPVVIRAELAKARSEWNKEKQEEIHRIQEQNEQDYRQFLDDHRNKINEVLAAAKEDFMKQKTELLLQKETELQTCLDQSRREWTMQEAKRIQLEIYQYEEDILTVLGVLLSDTQKEHISDSEDKQLLEIMSTCSSKWMSVQYFEKLKGCIQKAFQDTLPLLVENADPEWKKRNMAELSKDSASQGTGQGDPGPAAGHHAQPLALQATEAEADKKKVLEIKDLCCGHCFQELEKAKQECQDLKGKLEKCCRHLQHLERKHKAVVEKIGEENNKVVEELIEENNDMKNKLEELQTLCKTPPRSLSAGAIENACLPCSGGALEELRGQYIKAVKKIKCDMLRYIQESKERAAEMVKAEVLRERQETARKMRKYYLICLQQILQDDGKEGAEKKIMNAASKLATMAKLLETPISSKSQSKTTQSALPLTSEMLIAVKKSKRNDVNQKIPCCIESKSNSVNTITRTLCEQAPKRRAACNLQRLLENSEHQSIKHVGSKETHLEFQFGDGSCKHLNSLPRNVSPEFVPCEGEGGFGLHKKKDLLSDNGSESLPHSAAYPFLGTLGNKPSPRCTPGPSESGCMHITFRDSNERLGLKVYKCNPLMESENAASEKSQGLDVQEPPVKDGGDLSDCLGWPSSSATLSFDSREASFVHGRPQGTLEIPSESVKSKQFSPSGYLSDTEESNMICQTMKCQRYQTPYLSEETTYLEPGKISVNCGHPSRHKADRLKSDFKKLSSTLPSSVCQQPSRKLIVPLSSQQDSGFDSPFVNLD.

Disordered regions lie at residues 1 to 27 (MSLDFGSVALPVQNEDEEYDEEDYERE), 39 to 79 (HDML…NEQM), and 108 to 139 (NRSKTEDRHPVYHPEEGGDEGGSGYSPPSKCE). Residues 1-60 (MSLDFGSVALPVQNEDEEYDEEDYEREKELQQLLTDLPHDMLDDDLSSPELQYSDCSEDG) are interaction with PLK4. Acidic residues predominate over residues 14 to 24 (NEDEEYDEEDY). Over residues 108–123 (NRSKTEDRHPVYHPEE) the composition is skewed to basic and acidic residues. Residues 234–490 (ENMQIIQLQV…ISLYESAAKL (257 aa)) adopt a coiled-coil conformation. A compositionally biased stretch (basic and acidic residues) spans 587 to 604 (DEKSIEVETKTDTSEKPK). A disordered region spans residues 587 to 611 (DEKSIEVETKTDTSEKPKNQLWPES). Coiled-coil stretches lie at residues 615 to 664 (DVVR…QDFD), 700 to 772 (EKQQ…LEKE), and 902 to 993 (AVSE…INEV). The segment at 1120–1142 (ELSKDSASQGTGQGDPGPAAGHH) is disordered. A coiled-coil region spans residues 1170–1241 (HCFQELEKAK…LEELQTLCKT (72 aa)). The residue at position 1241 (Thr1241) is a Phosphothreonine.

This sequence belongs to the CEP152 family. As to quaternary structure, interacts (via N-terminus) with PLK4; the interaction is mutally exclusive with a PLK4:CEP192 interaction. Interacts (via C-terminus) with CPAP (via-N-terminus). Interacts with CINP. Interacts with CDK5RAP2, WDR62, CEP63 and CEP131. CEP63, CDK5RAP2, CEP152, WDR62 are proposed to form a stepwise assembled complex at the centrosome forming a ring near parental centrioles. Interacts with DEUP1; this interaction recruits CEP152 to the deuterosome. The interactions with CEP63 and DEUP1 are mutually exclusive. Interacts with CCDC66.

It is found in the cytoplasm. The protein localises to the cytoskeleton. The protein resides in the microtubule organizing center. Its subcellular location is the centrosome. It localises to the centriole. Necessary for centrosome duplication; the function also seems to involve CEP63, CDK5RAP2 and WDR62 through a stepwise assembled complex at the centrosome that recruits CDK2 required for centriole duplication. Acts as a molecular scaffold facilitating the interaction of PLK4 and CPAP, 2 molecules involved in centriole formation. Proposed to snatch PLK4 away from PLK4:CEP92 complexes in early G1 daughter centriole and to reposition PLK4 at the outer boundary of a newly forming CEP152 ring structure. Also plays a key role in deuterosome-mediated centriole amplification in multiciliated that can generate more than 100 centrioles. Overexpression of CEP152 can drive amplification of centrioles. This chain is Centrosomal protein of 152 kDa, found in Homo sapiens (Human).